Here is a 138-residue protein sequence, read N- to C-terminus: Protein PsiE homolog (138 aa).

Transmembrane regions (helical) follow at residues 14-34 (LQAL…GLLI), 56-76 (YEML…ALII), 84-104 (HFPL…LIII), and 109-129 (AIST…FFIV).

Belongs to the PsiE family.

It localises to the cell membrane. This is Protein PsiE homolog from Bacillus velezensis (strain DSM 23117 / BGSC 10A6 / LMG 26770 / FZB42) (Bacillus amyloliquefaciens subsp. plantarum).